A 120-amino-acid chain; its full sequence is Large ribosomal subunit protein eL34 (120 aa).

This sequence belongs to the eukaryotic ribosomal protein eL34 family.

In Nicotiana tabacum (Common tobacco), this protein is Large ribosomal subunit protein eL34 (RPL34).